Consider the following 419-residue polypeptide: UDP-N-acetylglucosamine 1-carboxyvinyltransferase 2 (419 aa).

Residue 22–23 (KN) coordinates phosphoenolpyruvate. Residue R92 coordinates UDP-N-acetyl-alpha-D-glucosamine. The active-site Proton donor is C116. C116 carries the post-translational modification 2-(S-cysteinyl)pyruvic acid O-phosphothioketal. UDP-N-acetyl-alpha-D-glucosamine contacts are provided by residues 121–125 (RPIDL), D306, and I328.

The protein belongs to the EPSP synthase family. MurA subfamily.

The protein localises to the cytoplasm. The catalysed reaction is phosphoenolpyruvate + UDP-N-acetyl-alpha-D-glucosamine = UDP-N-acetyl-3-O-(1-carboxyvinyl)-alpha-D-glucosamine + phosphate. It participates in cell wall biogenesis; peptidoglycan biosynthesis. In terms of biological role, cell wall formation. Adds enolpyruvyl to UDP-N-acetylglucosamine. The polypeptide is UDP-N-acetylglucosamine 1-carboxyvinyltransferase 2 (Streptococcus pyogenes serotype M1).